The primary structure comprises 319 residues: Ribonuclease Z (319 aa).

Zn(2+) contacts are provided by His-62, His-64, Asp-66, His-67, His-145, Asp-216, and His-274. Asp-66 functions as the Proton acceptor in the catalytic mechanism.

This sequence belongs to the RNase Z family. In terms of assembly, homodimer. Zn(2+) serves as cofactor.

It carries out the reaction Endonucleolytic cleavage of RNA, removing extra 3' nucleotides from tRNA precursor, generating 3' termini of tRNAs. A 3'-hydroxy group is left at the tRNA terminus and a 5'-phosphoryl group is left at the trailer molecule.. In terms of biological role, zinc phosphodiesterase, which displays some tRNA 3'-processing endonuclease activity. Probably involved in tRNA maturation, by removing a 3'-trailer from precursor tRNA. The sequence is that of Ribonuclease Z from Synechococcus sp. (strain CC9605).